Reading from the N-terminus, the 112-residue chain is uncharacterized protein (112 aa).

S51 and S53 each carry phosphoserine. A helical membrane pass occupies residues 90 to 110; that stretch reads FIFTLSMFLIAFILLIAFVSF.

The protein localises to the golgi apparatus membrane. It localises to the endoplasmic reticulum membrane. This is an uncharacterized protein from Schizosaccharomyces pombe (strain 972 / ATCC 24843) (Fission yeast).